The following is a 129-amino-acid chain: Transcription antitermination protein NusB (129 aa).

It belongs to the NusB family.

Functionally, involved in transcription antitermination. Required for transcription of ribosomal RNA (rRNA) genes. Binds specifically to the boxA antiterminator sequence of the ribosomal RNA (rrn) operons. The polypeptide is Transcription antitermination protein NusB (Staphylococcus aureus (strain MRSA252)).